Reading from the N-terminus, the 488-residue chain is Tyrosine-protein kinase Srms (488 aa).

The 62-residue stretch at 51 to 112 (PFPQLFLALY…PITHVAKASP (62 aa)) folds into the SH3 domain. An SH2 domain is found at 120 to 212 (WYFSGVSRTQ…LIQNPLLQPC (93 aa)). The Protein kinase domain maps to 230–488 (FALGRKLGEG…KLHAIHRCHP (259 aa)). ATP-binding positions include 236–244 (LGEGYFGEV) and Lys-258. Asp-350 (proton acceptor) is an active-site residue. At Tyr-380 the chain carries Phosphotyrosine; by autocatalysis.

Belongs to the protein kinase superfamily. Tyr protein kinase family. SRC subfamily. In terms of assembly, interacts (via the SH2 and SH3 domains) with DOK1. Interacts with KHDRBS1/SAM68 and VIM. Highly expressed in most breast cancers (at protein level).

Its subcellular location is the cytoplasm. The enzyme catalyses L-tyrosyl-[protein] + ATP = O-phospho-L-tyrosyl-[protein] + ADP + H(+). Its function is as follows. Non-receptor tyrosine-protein kinase which phosphorylates DOK1 on tyrosine residues. Also phosphorylates KHDRBS1/SAM68 and VIM on tyrosine residues. Phosphorylation of KHDRBS1 is EGF-dependent. Phosphorylates OTUB1, promoting deubiquitination of RPTOR. The polypeptide is Tyrosine-protein kinase Srms (SRMS) (Homo sapiens (Human)).